Consider the following 425-residue polypeptide: Elongation factor 1-alpha (425 aa).

The region spanning 5 to 221 (KPHINLAVIG…DELEVPDKPT (217 aa)) is the tr-type G domain. The G1 stretch occupies residues 14–21 (GHIDHGKS). Position 14–21 (14–21 (GHIDHGKS)) interacts with GTP. Ser21 contacts Mg(2+). Positions 70–74 (GITID) are G2. The segment at 91 to 94 (DCPG) is G3. GTP contacts are provided by residues 91–95 (DCPGH) and 146–149 (NKMD). The interval 146–149 (NKMD) is G4. Residues 185 to 187 (SAF) are G5.

It belongs to the TRAFAC class translation factor GTPase superfamily. Classic translation factor GTPase family. EF-Tu/EF-1A subfamily.

Its subcellular location is the cytoplasm. It carries out the reaction GTP + H2O = GDP + phosphate + H(+). Functionally, GTP hydrolase that promotes the GTP-dependent binding of aminoacyl-tRNA to the A-site of ribosomes during protein biosynthesis. This chain is Elongation factor 1-alpha, found in Methanospirillum hungatei JF-1 (strain ATCC 27890 / DSM 864 / NBRC 100397 / JF-1).